Consider the following 181-residue polypeptide: Protein GrpE (181 aa).

Residues 1 to 13 (MENTQENPATQSA) show a composition bias toward polar residues. A disordered region spans residues 1–34 (MENTQENPATQSAEDIGSAKQAAQGAAPAAEAAD). Residues 19-34 (AKQAAQGAAPAAEAAD) are compositionally biased toward low complexity.

This sequence belongs to the GrpE family. As to quaternary structure, homodimer.

The protein resides in the cytoplasm. Its function is as follows. Participates actively in the response to hyperosmotic and heat shock by preventing the aggregation of stress-denatured proteins, in association with DnaK and GrpE. It is the nucleotide exchange factor for DnaK and may function as a thermosensor. Unfolded proteins bind initially to DnaJ; upon interaction with the DnaJ-bound protein, DnaK hydrolyzes its bound ATP, resulting in the formation of a stable complex. GrpE releases ADP from DnaK; ATP binding to DnaK triggers the release of the substrate protein, thus completing the reaction cycle. Several rounds of ATP-dependent interactions between DnaJ, DnaK and GrpE are required for fully efficient folding. The sequence is that of Protein GrpE from Burkholderia vietnamiensis (strain G4 / LMG 22486) (Burkholderia cepacia (strain R1808)).